Here is a 932-residue protein sequence, read N- to C-terminus: Chitin synthase regulatory factor 3 (932 aa).

Positions 1-16 are enriched in basic and acidic residues; sequence MKDSHSSRRKYEKEKL. Disordered regions lie at residues 1–53, 264–356, and 374–406; these read MKDS…PTSR, TLEE…LQQP, and EVPA…NPTV. 3 stretches are compositionally biased toward polar residues: residues 35–53, 274–285, and 308–319; these read SGNT…PTSR, DSITNTVSNASS, and SHFSSTDSNTDS. Basic and acidic residues predominate over residues 337-349; the sequence is KSSETLKNPRNDD. Residue Ser393 is modified to Phosphoserine. Sel1-like repeat units follow at residues 638–674, 675–710, 711–747, 751–788, 789–825, 826–863, and 864–899; these read PEAL…KKGH, PLSN…EMDV, VEAM…KSKG, VRAM…VYGY, AAAQ…EQDY, GEAE…CKGL, and AKAQ…KQGF. Residues 905–932 form a disordered region; the sequence is RLEEQALSSKQTHSKAPKKKQQEQCVVM.

The chain is Chitin synthase regulatory factor 3 (chr3) from Schizosaccharomyces pombe (strain 972 / ATCC 24843) (Fission yeast).